Here is a 312-residue protein sequence, read N- to C-terminus: Ribosomal RNA small subunit methyltransferase H (312 aa).

S-adenosyl-L-methionine-binding positions include 32–34, aspartate 52, phenylalanine 79, aspartate 100, and glutamine 107; that span reads AGH.

Belongs to the methyltransferase superfamily. RsmH family.

The protein resides in the cytoplasm. It catalyses the reaction cytidine(1402) in 16S rRNA + S-adenosyl-L-methionine = N(4)-methylcytidine(1402) in 16S rRNA + S-adenosyl-L-homocysteine + H(+). Functionally, specifically methylates the N4 position of cytidine in position 1402 (C1402) of 16S rRNA. In Listeria monocytogenes serovar 1/2a (strain ATCC BAA-679 / EGD-e), this protein is Ribosomal RNA small subunit methyltransferase H.